Consider the following 295-residue polypeptide: Outer surface protein B (295 aa).

The first 16 residues, methionine 1–alanine 16, serve as a signal peptide directing secretion. The N-palmitoyl cysteine moiety is linked to residue cysteine 17. The S-diacylglycerol cysteine moiety is linked to residue cysteine 17.

Its subcellular location is the cell outer membrane. This Borreliella burgdorferi (Lyme disease spirochete) protein is Outer surface protein B (ospB).